Reading from the N-terminus, the 311-residue chain is Olfactory receptor 4K1 (311 aa).

Topologically, residues 1–25 (MAHTNESMVSEFVLLGLSNSWGLQL) are extracellular. N5 carries an N-linked (GlcNAc...) asparagine glycan. A helical membrane pass occupies residues 26 to 49 (FFFAIFSIVYVTSVLGNVLIIVII). Over 50-57 (SFDSHLNS) the chain is Cytoplasmic. A helical transmembrane segment spans residues 58 to 79 (PMYFLLSNLSFIDICQSNFATP). The Extracellular segment spans residues 80–100 (KMLVDFFIERKTISFEGCMAQ). C97 and C189 are oxidised to a cystine. A helical membrane pass occupies residues 101 to 120 (IFVLHSFVGSEMMLLVAMAY). The Cytoplasmic portion of the chain corresponds to 121–139 (DRFIAICKPLHYSTIMNRR). A helical membrane pass occupies residues 140–158 (LCVIFVSISWAVGVLHSVS). The Extracellular segment spans residues 159 to 195 (HLAFTVDLPFCGPNEVDSFFCDLPLVIELACMDTYEM). A helical membrane pass occupies residues 196-219 (EIMTLTNSGLISLSCFLALIISYT). At 220–235 (IILIGVRCRSSSGSSK) the chain is on the cytoplasmic side. Residues 236–258 (ALSTLTAHITVVILFFGPCIYFY) form a helical membrane-spanning segment. Over 259–269 (IWPFSRLPVDK) the chain is Extracellular. Residues 270–289 (FLSVFYTVCTPLLNPIIYSL) traverse the membrane as a helical segment. The Cytoplasmic segment spans residues 290–311 (RNEDVKAAMWKLRNRHVNSWKN).

Belongs to the G-protein coupled receptor 1 family.

It is found in the cell membrane. Odorant receptor. In Homo sapiens (Human), this protein is Olfactory receptor 4K1 (OR4K1).